The chain runs to 134 residues: ATP synthase epsilon chain, chloroplastic (134 aa).

It belongs to the ATPase epsilon chain family. As to quaternary structure, F-type ATPases have 2 components, CF(1) - the catalytic core - and CF(0) - the membrane proton channel. CF(1) has five subunits: alpha(3), beta(3), gamma(1), delta(1), epsilon(1). CF(0) has three main subunits: a, b and c.

It localises to the plastid. Its subcellular location is the chloroplast thylakoid membrane. Produces ATP from ADP in the presence of a proton gradient across the membrane. This chain is ATP synthase epsilon chain, chloroplastic, found in Nymphaea alba (White water-lily).